A 407-amino-acid polypeptide reads, in one-letter code: tRNA pseudouridine synthase Pus10 (407 aa).

Catalysis depends on aspartate 232, which acts as the Nucleophile. Residues tyrosine 300 and tyrosine 369 each coordinate substrate.

It belongs to the pseudouridine synthase Pus10 family.

It catalyses the reaction uridine(54) in tRNA = pseudouridine(54) in tRNA. It carries out the reaction uridine(55) in tRNA = pseudouridine(55) in tRNA. In terms of biological role, responsible for synthesis of pseudouridine from uracil-54 and uracil-55 in the psi GC loop of transfer RNAs. In Methanosphaera stadtmanae (strain ATCC 43021 / DSM 3091 / JCM 11832 / MCB-3), this protein is tRNA pseudouridine synthase Pus10.